Reading from the N-terminus, the 579-residue chain is Probable cholinesterase (579 aa).

The signal sequence occupies residues Met1–Ala19. Residues Asn77 and Asn144 are each glycosylated (N-linked (GlcNAc...) asparagine; by host). The active-site Acyl-ester intermediate is Ser217. N-linked (GlcNAc...) asparagine; by host glycosylation is found at Asn257, Asn269, and Asn283. Glu337 (charge relay system) is an active-site residue. N-linked (GlcNAc...) asparagine; by host glycosylation is found at Asn373 and Asn394. His451 acts as the Charge relay system in catalysis. A glycan (N-linked (GlcNAc...) asparagine; by host) is linked at Asn469.

The protein belongs to the type-B carboxylesterase/lipase family.

It catalyses the reaction an acylcholine + H2O = a carboxylate + choline + H(+). Functionally, may be involved in the disruption of the host membrane. This Acanthamoeba polyphaga mimivirus (APMV) protein is Probable cholinesterase.